The primary structure comprises 92 residues: UPF0298 protein BH2594 (92 aa).

Belongs to the UPF0298 family.

It localises to the cytoplasm. The protein is UPF0298 protein BH2594 of Halalkalibacterium halodurans (strain ATCC BAA-125 / DSM 18197 / FERM 7344 / JCM 9153 / C-125) (Bacillus halodurans).